We begin with the raw amino-acid sequence, 142 residues long: MAKKIDAYIKLQVKSGSANPSPPVGPALGQKGVNIMEFCKAFNARTEKMEKGMPIPVVITVYSDRSFTFETKTSPASYLLKTAAGLKSGSPRPNTQKVGTIARAKVQEIAELKAADMTGADIEAMTRSIEGTARSMGLVVED.

This sequence belongs to the universal ribosomal protein uL11 family. As to quaternary structure, part of the ribosomal stalk of the 50S ribosomal subunit. Interacts with L10 and the large rRNA to form the base of the stalk. L10 forms an elongated spine to which L12 dimers bind in a sequential fashion forming a multimeric L10(L12)X complex. In terms of processing, one or more lysine residues are methylated.

Functionally, forms part of the ribosomal stalk which helps the ribosome interact with GTP-bound translation factors. In Shewanella baltica (strain OS223), this protein is Large ribosomal subunit protein uL11.